A 59-amino-acid chain; its full sequence is Large ribosomal subunit protein bL32 (59 aa).

The span at 1-16 shows a compositional bias: basic residues; it reads MAVPKRKVSPHRRGNR. Residues 1-20 are disordered; it reads MAVPKRKVSPHRRGNRRAHD.

Belongs to the bacterial ribosomal protein bL32 family.

This chain is Large ribosomal subunit protein bL32, found in Erythrobacter litoralis (strain HTCC2594).